The primary structure comprises 164 residues: Cytochrome c-type biogenesis protein CcmE (164 aa).

Topologically, residues 1 to 8 (MNPRRQKR) are cytoplasmic. The chain crosses the membrane as a helical; Signal-anchor for type II membrane protein span at residues 9 to 29 (LIVISAIVLVIGAAIGLMLYA). At 30–164 (LSQNIDLFYT…QAYSTPKVSG (135 aa)) the chain is on the periplasmic side. 2 residues coordinate heme: His132 and Tyr136.

This sequence belongs to the CcmE/CycJ family.

It localises to the cell inner membrane. Heme chaperone required for the biogenesis of c-type cytochromes. Transiently binds heme delivered by CcmC and transfers the heme to apo-cytochromes in a process facilitated by CcmF and CcmH. This Pseudoalteromonas atlantica (strain T6c / ATCC BAA-1087) protein is Cytochrome c-type biogenesis protein CcmE.